A 247-amino-acid chain; its full sequence is Triosephosphate isomerase (247 aa).

N9–K11 is a substrate binding site. H94 acts as the Electrophile in catalysis. The Proton acceptor role is filled by E165. Residues G171, S209, and G230 to G231 contribute to the substrate site.

It belongs to the triosephosphate isomerase family. In terms of assembly, homodimer.

It is found in the cytoplasm. The enzyme catalyses D-glyceraldehyde 3-phosphate = dihydroxyacetone phosphate. It functions in the pathway carbohydrate biosynthesis; gluconeogenesis. It participates in carbohydrate degradation; glycolysis; D-glyceraldehyde 3-phosphate from glycerone phosphate: step 1/1. Functionally, involved in the gluconeogenesis. Catalyzes stereospecifically the conversion of dihydroxyacetone phosphate (DHAP) to D-glyceraldehyde-3-phosphate (G3P). The chain is Triosephosphate isomerase from Albidiferax ferrireducens (strain ATCC BAA-621 / DSM 15236 / T118) (Rhodoferax ferrireducens).